The chain runs to 271 residues: MAAEEPQQQKQEPLGSDSEGVNCLAYDEAIMAQQDRIQQEIAVQNPLVSERLELSVLYKEYAEDDNIYQQKIKDLHKKYSYIRKTRPDGNCFYRAFGFSHLEALLDDSKELQRFKAVSAKSKEDLVSQGFTEFTIEDFHNTFMDLIEQVEKQTSVADLLASFNDQSTSDYLVVYLRLLTSGYLQRESKFFEHFIEGGRTVKEFCQQEVEPMCKESDHIHIIALAQALSVSIQVEYMDRGEGGTTNPHIFPEGSEPKVYLLYRPGHYDILYK.

Alanine 2 carries the post-translational modification N-acetylalanine. Serine 16 is subject to Phosphoserine. Tyrosine 26 carries the post-translational modification Phosphotyrosine; by SRC. Residues serine 80–lysine 271 enclose the OTU domain. Aspartate 88 is an active-site residue. The active-site Nucleophile is cysteine 91. 2 ubiquitin-conjugating enzyme E2 binding regions span residues phenylalanine 130–phenylalanine 138 and aspartate 169–leucine 177. The segment at phenylalanine 189–glutamate 195 is free ubiquitin binding. The interval glutamine 206–lysine 213 is ubiquitin-conjugating enzyme E2 binding. Free ubiquitin binding stretches follow at residues glutamate 214–isoleucine 221 and asparagine 245–glutamate 251. Histidine 265 is an active-site residue.

Belongs to the peptidase C65 family. As to quaternary structure, interacts with FUS and RACK1. Interacts with UBE2D1/UBCH5A, UBE2W/UBC16 and UBE2N/UBC13. Interacts with RNF128. Forms a ternary complex with RNF128 and USP8. Interacts with the C-terminal UCH catalytic domain of USP8. In terms of assembly, interacts with RNF128. Does not associate with USP8. In terms of processing, phosphorylation at Tyr-26 by SRC and SRMS promotes deubiquitination of RPTOR via a non-catalytic process. As to expression, isoform 1 is ubiquitous. Isoform 2 is expressed only in lymphoid tissues such as tonsils, lymph nodes and spleen, as well as peripheral blood mononuclear cells.

The protein resides in the cytoplasm. It catalyses the reaction Thiol-dependent hydrolysis of ester, thioester, amide, peptide and isopeptide bonds formed by the C-terminal Gly of ubiquitin (a 76-residue protein attached to proteins as an intracellular targeting signal).. Its activity is regulated as follows. By free ubiquitin: binding of free ubiquitin triggers conformational changes in the OTU domain and formation of a ubiquitin-binding helix in the N-terminus, promoting binding of the conjugated donor ubiquitin in UBE2N/UBC13 to OTUB1. Functionally, hydrolase that can specifically remove 'Lys-48'-linked conjugated ubiquitin from proteins and plays an important regulatory role at the level of protein turnover by preventing degradation. Regulator of T-cell anergy, a phenomenon that occurs when T-cells are rendered unresponsive to antigen rechallenge and no longer respond to their cognate antigen. Acts via its interaction with RNF128/GRAIL, a crucial inductor of CD4 T-cell anergy. Isoform 1 destabilizes RNF128, leading to prevent anergy. In contrast, isoform 2 stabilizes RNF128 and promotes anergy. Surprisingly, it regulates RNF128-mediated ubiquitination, but does not deubiquitinate polyubiquitinated RNF128. Deubiquitinates estrogen receptor alpha (ESR1). Mediates deubiquitination of 'Lys-48'-linked polyubiquitin chains, but not 'Lys-63'-linked polyubiquitin chains. Not able to cleave di-ubiquitin. Also capable of removing NEDD8 from NEDD8 conjugates, but with a much lower preference compared to 'Lys-48'-linked ubiquitin. Its function is as follows. Plays a key non-catalytic role in DNA repair regulation by inhibiting activity of RNF168, an E3 ubiquitin-protein ligase that promotes accumulation of 'Lys-63'-linked histone H2A and H2AX at DNA damage sites. Inhibits RNF168 independently of ubiquitin thioesterase activity by binding and inhibiting UBE2N/UBC13, the E2 partner of RNF168, thereby limiting spreading of 'Lys-63'-linked histone H2A and H2AX marks. Inhibition occurs by binding to free ubiquitin: free ubiquitin acts as an allosteric regulator that increases affinity for UBE2N/UBC13 and disrupts interaction with UBE2V1. The OTUB1-UBE2N/UBC13-free ubiquitin complex adopts a configuration that mimics a cleaved 'Lys48'-linked di-ubiquitin chain. Acts as a regulator of mTORC1 and mTORC2 complexes. When phosphorylated at Tyr-26, acts as an activator of the mTORC1 complex by mediating deubiquitination of RPTOR via a non-catalytic process: acts by binding and inhibiting the activity of the ubiquitin-conjugating enzyme E2 (UBE2D1/UBCH5A, UBE2W/UBC16 and UBE2N/UBC13), thereby preventing ubiquitination of RPTOR. Can also act as an inhibitor of the mTORC1 and mTORC2 complexes in response to amino acids by mediating non-catalytic deubiquitination of DEPTOR. In Homo sapiens (Human), this protein is Ubiquitin thioesterase OTUB1 (OTUB1).